We begin with the raw amino-acid sequence, 127 residues long: Protein translocase subunit SecE (127 aa).

Over Met1 to Trp19 the chain is Cytoplasmic. Residues Val20–Gly32 form a helical membrane-spanning segment. The Periplasmic portion of the chain corresponds to Asn33–Val48. The chain crosses the membrane as a helical span at residues Val49 to Leu60. Over Leu61 to Val97 the chain is Cytoplasmic. The helical transmembrane segment at Ala98 to Leu115 threads the bilayer. Topologically, residues Val116–Phe127 are periplasmic.

This sequence belongs to the SecE/SEC61-gamma family. Component of the Sec protein translocase complex. Heterotrimer consisting of SecY, SecE and SecG subunits. The heterotrimers can form oligomers, although 1 heterotrimer is thought to be able to translocate proteins. Interacts with the ribosome. Interacts with SecDF, and other proteins may be involved. Interacts with SecA.

It localises to the cell inner membrane. Functionally, essential subunit of the Sec protein translocation channel SecYEG. Clamps together the 2 halves of SecY. May contact the channel plug during translocation. The sequence is that of Protein translocase subunit SecE from Escherichia coli O157:H7.